Here is a 159-residue protein sequence, read N- to C-terminus: uncharacterized protein (159 aa).

The segment at 1 to 139 is disordered; sequence MSRRAPGSRL…RKSQERSMSY (139 aa). Polar residues predominate over residues 9–31; sequence RLSSGGTNYSRSWNDWQPRTDSA. Basic and acidic residues predominate over residues 65–82; sequence QRHDDTRVHADIQNDEKG. The segment covering 105–119 has biased composition (polar residues); it reads RVNNVTSPEFTSVQH. Residues 125-134 are compositionally biased toward basic and acidic residues; that stretch reads ATKDMRKSQE.

This is an uncharacterized protein from Homo sapiens (Human).